The chain runs to 5141 residues: SCO-spondin (5141 aa).

Positions 1–17 (MLLPALLFGMLWAPANG) are cleaved as a signal peptide. The EMI domain occupies 18–102 (HWCEQIETVH…ACCPGWGGIH (85 aa)). 4 N-linked (GlcNAc...) asparagine glycosylation sites follow: Asn-88, Asn-130, Asn-150, and Asn-167. In terms of domain architecture, VWFD 1 spans 193–364 (ATCATWSGFH…RLPGYEPGCL (172 aa)). Intrachain disulfides connect Cys-195-Cys-325, Cys-217-Cys-363, and Cys-239-Cys-245. A TIL 1 domain is found at 472 to 527 (CPGGQLYSDCISSCPPSCSAVAQGEEGSCGKECVSGCECPTGLFWDGALCVPAAHC). One can recognise a VWFD 2 domain in the interval 565–738 (AECAVGGDGH…FQVSGDGRCP (174 aa)). 2 cysteine pairs are disulfide-bonded: Cys-567/Cys-700 and Cys-591/Cys-737. 2 N-linked (GlcNAc...) asparagine glycosylation sites follow: Asn-657 and Asn-822. The 54-residue stretch at 830–883 (CPGGQVYQECAPACGHYCGEPEDCKELGSCVAGCNCPPGLLWDLEGQCVPPSMC) folds into the TIL 2 domain. 3 N-linked (GlcNAc...) asparagine glycosylation sites follow: Asn-895, Asn-949, and Asn-991. Positions 1017–1187 (GWCQASGAPH…HSWRLNPLCP (171 aa)) constitute a VWFD 3 domain. Intrachain disulfides connect Cys-1019/Cys-1151, Cys-1041/Cys-1186, and Cys-1062/Cys-1069. Residues 1280-1336 (CEGGQVYEPCGSTCPPTCHDHHPELRWHCQAITCVEGCFCPEGTLLHGGTCVELTDC) form the TIL 3 domain. A glycan (N-linked (GlcNAc...) asparagine) is linked at Asn-1357. LDL-receptor class A domains follow at residues 1380–1417 (GCAE…EGCD), 1420–1456 (VCGE…QGCL), 1456–1492 (LCPQ…ESCL), and 1496–1534 (SCTS…VHCS). Cystine bridges form between Cys-1381–Cys-1394, Cys-1388–Cys-1407, Cys-1401–Cys-1416, Cys-1421–Cys-1433, Cys-1428–Cys-1446, Cys-1440–Cys-1455, Cys-1457–Cys-1469, Cys-1464–Cys-1482, Cys-1476–Cys-1491, Cys-1497–Cys-1509, Cys-1504–Cys-1522, and Cys-1516–Cys-1533. A disordered region spans residues 1533–1567 (CSSPSLPTPPAGIGQNPSTSSPDTSPSPVGSASPA). Residues 1549-1567 (PSTSSPDTSPSPVGSASPA) show a composition bias toward low complexity. LDL-receptor class A domains are found at residues 1569 to 1605 (PCSL…LDCG) and 1607 to 1646 (PCKL…DVCE). 6 disulfides stabilise this stretch: Cys-1570/Cys-1582, Cys-1577/Cys-1595, Cys-1589/Cys-1604, Cys-1608/Cys-1621, Cys-1615/Cys-1634, and Cys-1628/Cys-1645. 2 N-linked (GlcNAc...) asparagine glycosylation sites follow: Asn-1655 and Asn-1668. Residues 1660–1700 (PCPEFSCPNGTCIDFLLVCDGSPDCELADETEPSLDEQGCG) enclose the LDL-receptor class A 7 domain. 9 disulfide bridges follow: Cys-1661-Cys-1671, Cys-1666-Cys-1684, Cys-1678-Cys-1699, Cys-1711-Cys-1747, Cys-1715-Cys-1752, Cys-1726-Cys-1737, Cys-1767-Cys-1964, Cys-1771-Cys-1969, and Cys-1781-Cys-1791. TSP type-1 domains follow at residues 1699–1753 (CGTW…EACP) and 1755–1970 (DGEW…EPCE). Residue Asn-1725 is glycosylated (N-linked (GlcNAc...) asparagine). The N-linked (GlcNAc...) asparagine glycan is linked to Asn-1814. EGF-like domains lie at 1829-1868 (CPLT…GRCV) and 1869-1895 (RPRQ…CQLC). The VWFC 1 domain maps to 1970 to 2030 (EGCEQWGLTY…GMGESCCHCA (61 aa)). An N-linked (GlcNAc...) asparagine glycan is attached at Asn-2035. Disulfide bonds link Cys-2070-Cys-2226, Cys-2236-Cys-2248, Cys-2243-Cys-2261, and Cys-2255-Cys-2270. Residues 2070–2226 (CYSPLGLAGL…IFLWVELLGC (157 aa)) enclose the F5/8 type C domain. The disordered stretch occupies residues 2087-2109 (PLEHSTRAAPVEAPTAGPGPRED). N-linked (GlcNAc...) asparagine glycosylation is found at Asn-2130 and Asn-2148. The 37-residue stretch at 2235 to 2271 (LCPGTRHRCANGDCALKGGPCDGAVDCEDGSDEEGCG) folds into the LDL-receptor class A 8 domain. Positions 2262–2335 (EDGSDEEGCG…SPSASEGLLP (74 aa)) are disordered. Residues 2276–2294 (STASRVHSTARTPALSPTQ) are compositionally biased toward polar residues. Residues 2301 to 2314 (HPREGLADMEHQQP) are compositionally biased toward basic and acidic residues. LDL-receptor class A domains follow at residues 2391–2427 (RCGP…QHCA) and 2448–2484 (LCSP…DDCV). 12 cysteine pairs are disulfide-bonded: Cys-2392–Cys-2404, Cys-2399–Cys-2417, Cys-2411–Cys-2426, Cys-2449–Cys-2461, Cys-2456–Cys-2474, Cys-2468–Cys-2483, Cys-2486–Cys-2522, Cys-2497–Cys-2501, Cys-2532–Cys-2537, Cys-2552–Cys-2589, Cys-2556–Cys-2594, and Cys-2567–Cys-2579. TSP type-1 domains follow at residues 2485 to 2538 (DCVL…QACP) and 2540 to 2595 (AGAW…QLCP). Positions 2618–2660 (PPCPPSCLDPEANRSCSGHCVEGCRCPPGLFLQDSHCLPLSEC) constitute a TIL 4 domain. N-linked (GlcNAc...) asparagine glycans are attached at residues Asn-2630 and Asn-2679. TSP type-1 domains are found at residues 2700-2754 (SCGW…TDCG), 2758-2813 (PGWT…SLCP), and 2815-2868 (PSAW…HPCT). 9 disulfide bridges follow: Cys-2701/Cys-2739, Cys-2712/Cys-2716, Cys-2749/Cys-2753, Cys-2769/Cys-2807, Cys-2773/Cys-2812, Cys-2789/Cys-2797, Cys-2827/Cys-2862, Cys-2831/Cys-2867, and Cys-2842/Cys-2852. N-linked (GlcNAc...) asparagine glycans are attached at residues Asn-2921 and Asn-2951. 2 consecutive TSP type-1 domains span residues 2969–3024 (ACGW…RPCQ) and 3025–3068 (GPGA…QPCA). 3 disulfide bridges follow: Cys-2970-Cys-3008, Cys-2981-Cys-2985, and Cys-3018-Cys-3023. Asn-3046, Asn-3101, Asn-3148, and Asn-3158 each carry an N-linked (GlcNAc...) asparagine glycan. A TIL 5 domain is found at 3075 to 3127 (CPKDQQWLDCAQGPASCAHLSTPREANQTCHPGCYCLSGMLLLNNVCVPAQDC). 2 consecutive TSP type-1 domains span residues 3168-3235 (QPAW…PGCN) and 3237-3292 (AGVW…QPCP). 6 disulfide bridges follow: Cys-3180-Cys-3229, Cys-3184-Cys-3234, Cys-3195-Cys-3219, Cys-3249-Cys-3286, Cys-3253-Cys-3291, and Cys-3264-Cys-3276. Asn-3295 carries an N-linked (GlcNAc...) asparagine glycan. The TIL 6 domain occupies 3300 to 3350 (EGAEYSPCGPPCPRSCDDLVHCMWHCQPGCYCPPGKVLSADGAICVQPHHC). N-linked (GlcNAc...) asparagine glycosylation is present at Asn-3384. TSP type-1 domains follow at residues 3393-3455 (SGDW…TACP) and 3457-3512 (DGAW…TPCT). 6 disulfides stabilise this stretch: Cys-3405–Cys-3448, Cys-3409–Cys-3454, Cys-3420–Cys-3432, Cys-3469–Cys-3504, Cys-3472–Cys-3511, and Cys-3482–Cys-3494. N-linked (GlcNAc...) asparagine glycosylation occurs at Asn-3506. The 57-residue stretch at 3514–3570 (CGGGQDLLPCGQPCPHSCQDLSLGSTCQPGSSGCQSGCGCPPGQLSQDGLCVFPADC) folds into the TIL 7 domain. 2 N-linked (GlcNAc...) asparagine glycosylation sites follow: Asn-3584 and Asn-3611. One can recognise a TSP type-1 14 domain in the interval 3630–3678 (PGIWSSWGPWEKCSVPCGGGEQLRSRQCARPPCPGLAQQSRTCHIHVCR). Cystine bridges form between Cys-3642/Cys-3672, Cys-3646/Cys-3677, and Cys-3657/Cys-3662. Asn-3787 carries N-linked (GlcNAc...) asparagine glycosylation. 4 consecutive TSP type-1 domains span residues 3806–3862 (RGYF…PECP), 3876–3928 (AGGW…PSCT), 3942–3998 (NCFW…RACP), and 4000–4055 (PGGW…MPCE). Cystine bridges form between Cys-3818-Cys-3856, Cys-3822-Cys-3861, and Cys-3834-Cys-3846. An N-linked (GlcNAc...) asparagine glycan is attached at Asn-3910. 6 disulfides stabilise this stretch: Cys-3943/Cys-3979, Cys-3954/Cys-3958, Cys-3992/Cys-3997, Cys-4012/Cys-4049, Cys-4016/Cys-4054, and Cys-4027/Cys-4039. Positions 4058–4113 (CPAGMEMVSCANRCPYSCSDLQEAVMCQEDQACQLGCRCSEGFLEQDGGCVPVGHC) constitute a TIL 8 domain. Asn-4135 carries an N-linked (GlcNAc...) asparagine glycan. 4 TSP type-1 domains span residues 4155–4208 (HCAW…DPCP), 4249–4304 (PGGW…QLCL), 4306–4362 (LLEI…GPCQ), and 4364–4418 (DCMW…GNCS). Intrachain disulfides connect Cys-4156–Cys-4192, Cys-4167–Cys-4171, Cys-4202–Cys-4207, Cys-4261–Cys-4298, Cys-4265–Cys-4303, and Cys-4276–Cys-4288. A glycan (N-linked (GlcNAc...) asparagine) is linked at Asn-4345. 3 cysteine pairs are disulfide-bonded: Cys-4365-Cys-4402, Cys-4376-Cys-4378, and Cys-4412-Cys-4417. Residue Asn-4416 is glycosylated (N-linked (GlcNAc...) asparagine). In terms of domain architecture, TIL 9 spans 4422–4477 (CLPPFEFQSCGSPCAGLCATHLSHQLCQDLPPCQPGCYCPMGLLEQDGGCILPEQC). The N-linked (GlcNAc...) asparagine glycan is linked to Asn-4557. Residues 4608–4659 (TCQWGPWGPWSPCQVPCSGGFKLRWREASDNSVGECRGPWAQTESCNMGSCP) enclose the TSP type-1 23 domain. Cystine bridges form between Cys-4609–Cys-4643, Cys-4620–Cys-4624, and Cys-4653–Cys-4658. The region spanning 4673–4719 (DCANQCPRSCADLWEGVQCLQGPCSPGCRCPPGQLVQDGHCVPISSC) is the TIL 10 domain. N-linked (GlcNAc...) asparagine glycosylation is found at Asn-4727, Asn-4744, and Asn-4749. Residues 4759–4812 (CPVLGPWSPWSECSAVCGGGTMVRYRSCEEHPDSAPCQALDMEQRVECNLQTCP) form the TSP type-1 24 domain. 3 cysteine pairs are disulfide-bonded: Cys-4771/Cys-4806, Cys-4775/Cys-4811, and Cys-4786/Cys-4795. Residues 4814–4868 (CPPGQVLSTCATLCPSFCSHLWPGTICVREPCQLGCGCPGGQLLHSGTCIPPEAC) form the TIL 11 domain. N-linked (GlcNAc...) asparagine glycans are attached at residues Asn-4899, Asn-4942, and Asn-4949. Residues 4920–4978 (CPPGEILQLGELRPCEKTCLEMNKTQAWSNCTEAQVPGCVCQLGHFRSHTGLCVPEDHC) enclose the TIL 12 domain. Positions 4978–5036 (CECWHHGSPHLPGSEWQEACESCRCLHGKSVCTQHCPELSCAQGEVVVQEPGSCCPICQ) constitute a VWFC 2 domain. 4 disulfides stabilise this stretch: Cys-5047–Cys-5095, Cys-5061–Cys-5112, Cys-5071–Cys-5128, and Cys-5075–Cys-5130. Residues 5047–5134 (CRHLTELRNL…IHNCHCSACQ (88 aa)) enclose the CTCK domain. A glycan (N-linked (GlcNAc...) asparagine) is linked at Asn-5055.

It belongs to the thrombospondin family.

It is found in the secreted. It localises to the extracellular space. Involved in the modulation of neuronal aggregation. May be involved in developmental events during the formation of the central nervous system. This chain is SCO-spondin, found in Rattus norvegicus (Rat).